The sequence spans 331 residues: L-lactate dehydrogenase A chain (331 aa).

NAD(+)-binding positions include 29-57 (GMVG…MEDK) and Arg-98. Arg-105, Asn-137, and Arg-168 together coordinate substrate. Asn-137 is a binding site for NAD(+). Residue His-192 is the Proton acceptor of the active site. A substrate-binding site is contributed by Thr-247.

The protein belongs to the LDH/MDH superfamily. LDH family. In terms of assembly, homotetramer.

It localises to the cytoplasm. It catalyses the reaction (S)-lactate + NAD(+) = pyruvate + NADH + H(+). Its pathway is fermentation; pyruvate fermentation to lactate; (S)-lactate from pyruvate: step 1/1. Functionally, interconverts simultaneously and stereospecifically pyruvate and lactate with concomitant interconversion of NADH and NAD(+). The polypeptide is L-lactate dehydrogenase A chain (ldha) (Champsocephalus gunnari (Mackerel icefish)).